The following is a 328-amino-acid chain: Sulfate adenylyltransferase subunit 2 (328 aa).

The tract at residues 309 to 328 (RAIDKDQTASMEKKKQEGYF) is disordered.

Belongs to the PAPS reductase family. CysD subfamily. As to quaternary structure, heterodimer composed of CysD, the smaller subunit, and CysN.

It catalyses the reaction sulfate + ATP + H(+) = adenosine 5'-phosphosulfate + diphosphate. It participates in sulfur metabolism; hydrogen sulfide biosynthesis; sulfite from sulfate: step 1/3. In terms of biological role, with CysN forms the ATP sulfurylase (ATPS) that catalyzes the adenylation of sulfate producing adenosine 5'-phosphosulfate (APS) and diphosphate, the first enzymatic step in sulfur assimilation pathway. APS synthesis involves the formation of a high-energy phosphoric-sulfuric acid anhydride bond driven by GTP hydrolysis by CysN coupled to ATP hydrolysis by CysD. The polypeptide is Sulfate adenylyltransferase subunit 2 (Hyphomonas neptunium (strain ATCC 15444)).